The sequence spans 109 residues: Large ribosomal subunit protein uL22 (109 aa).

This sequence belongs to the universal ribosomal protein uL22 family. Part of the 50S ribosomal subunit.

In terms of biological role, this protein binds specifically to 23S rRNA; its binding is stimulated by other ribosomal proteins, e.g. L4, L17, and L20. It is important during the early stages of 50S assembly. It makes multiple contacts with different domains of the 23S rRNA in the assembled 50S subunit and ribosome. Its function is as follows. The globular domain of the protein is located near the polypeptide exit tunnel on the outside of the subunit, while an extended beta-hairpin is found that lines the wall of the exit tunnel in the center of the 70S ribosome. This Bordetella petrii (strain ATCC BAA-461 / DSM 12804 / CCUG 43448) protein is Large ribosomal subunit protein uL22.